Reading from the N-terminus, the 338-residue chain is Ribosomal RNA small subunit methyltransferase H (338 aa).

Residues 53–55, aspartate 72, tyrosine 99, aspartate 123, and glutamine 130 contribute to the S-adenosyl-L-methionine site; that span reads GGH. Disordered regions lie at residues 276–297 and 304–323; these read EITP…PGMG and TRGA…RSAP.

It belongs to the methyltransferase superfamily. RsmH family.

It localises to the cytoplasm. It carries out the reaction cytidine(1402) in 16S rRNA + S-adenosyl-L-methionine = N(4)-methylcytidine(1402) in 16S rRNA + S-adenosyl-L-homocysteine + H(+). Specifically methylates the N4 position of cytidine in position 1402 (C1402) of 16S rRNA. The protein is Ribosomal RNA small subunit methyltransferase H of Rhodococcus jostii (strain RHA1).